A 346-amino-acid chain; its full sequence is Golgi-associated RAB2 interactor protein 2 (346 aa).

The segment at 275-346 is disordered; sequence TPVESEANTS…EKHVRQPKDF (72 aa). 2 stretches are compositionally biased toward basic and acidic residues: residues 283–297 and 334–346; these read TSKEMENKTSEEKTP and KLVEKHVRQPKDF.

Belongs to the GARIN family. In terms of assembly, interacts with CALM1.

The protein resides in the cell projection. Its subcellular location is the cilium. The protein localises to the flagellum. Seems to play a role in sperm motility. This Macaca fascicularis (Crab-eating macaque) protein is Golgi-associated RAB2 interactor protein 2 (GARIN2).